The following is a 161-amino-acid chain: RNA pyrophosphohydrolase (161 aa).

The region spanning 12 to 154 (PYRPGVGMMI…KRKLYQAVVK (143 aa)) is the Nudix hydrolase domain. The short motif at 46-67 (GGIVPGETPSIAAMREMLEEIG) is the Nudix box element.

This sequence belongs to the Nudix hydrolase family. RppH subfamily. A divalent metal cation is required as a cofactor.

Functionally, accelerates the degradation of transcripts by removing pyrophosphate from the 5'-end of triphosphorylated RNA, leading to a more labile monophosphorylated state that can stimulate subsequent ribonuclease cleavage. The chain is RNA pyrophosphohydrolase from Rickettsia rickettsii (strain Iowa).